The following is a 290-amino-acid chain: Bifunctional protein FolD (290 aa).

NADP(+)-binding positions include 166–168 (GAS) and I232.

The protein belongs to the tetrahydrofolate dehydrogenase/cyclohydrolase family. In terms of assembly, homodimer.

It carries out the reaction (6R)-5,10-methylene-5,6,7,8-tetrahydrofolate + NADP(+) = (6R)-5,10-methenyltetrahydrofolate + NADPH. It catalyses the reaction (6R)-5,10-methenyltetrahydrofolate + H2O = (6R)-10-formyltetrahydrofolate + H(+). Its pathway is one-carbon metabolism; tetrahydrofolate interconversion. Its function is as follows. Catalyzes the oxidation of 5,10-methylenetetrahydrofolate to 5,10-methenyltetrahydrofolate and then the hydrolysis of 5,10-methenyltetrahydrofolate to 10-formyltetrahydrofolate. This Proteus mirabilis (strain HI4320) protein is Bifunctional protein FolD.